Consider the following 197-residue polypeptide: Imidazoleglycerol-phosphate dehydratase (197 aa).

Belongs to the imidazoleglycerol-phosphate dehydratase family.

It localises to the cytoplasm. The catalysed reaction is D-erythro-1-(imidazol-4-yl)glycerol 3-phosphate = 3-(imidazol-4-yl)-2-oxopropyl phosphate + H2O. The protein operates within amino-acid biosynthesis; L-histidine biosynthesis; L-histidine from 5-phospho-alpha-D-ribose 1-diphosphate: step 6/9. In Rhodopseudomonas palustris (strain ATCC BAA-98 / CGA009), this protein is Imidazoleglycerol-phosphate dehydratase.